A 142-amino-acid chain; its full sequence is HTH-type transcriptional regulator MntR (142 aa).

Residues 1-63 (MPTPSMEDYI…YEKYRGLILT (63 aa)) form the HTH dtxR-type domain. The Mn(2+) site is built by Asp8, Glu11, His77, Glu99, Glu102, and His103.

It belongs to the DtxR/MntR family. In terms of assembly, homodimer.

The protein localises to the cytoplasm. Its activity is regulated as follows. DNA binding is strongly activated by Mn(2+). Functionally, central regulator of manganese homeostasis. This chain is HTH-type transcriptional regulator MntR, found in Listeria innocua serovar 6a (strain ATCC BAA-680 / CLIP 11262).